Consider the following 664-residue polypeptide: Intraflagellar transport protein 70B (664 aa).

TPR repeat units lie at residues 11 to 44, 45 to 78, 153 to 186, 188 to 220, 385 to 418, 423 to 456, and 458 to 491; these read DGEF…SPRS, RAGL…HPEL, YDGQ…SGYQ, DISY…GIRQ, LTEQ…YDET, IPVL…CNDH, and VWKL…NYDN. A coiled-coil region spans residues 507–534; sequence YIMTSQNEEAEELMRKIEKEEEQLSYDD. The TPR 8 repeat unit spans residues 543 to 576; sequence CIVNLVIGTLYCAKGNYDFGISRVIKSLEPYHKK.

Belongs to the TTC30/dfy-1/fleer family. As to quaternary structure, interacts with the IFT B complex components IFT27, IFT46, IFT74, IFT52, IFT57, IFT80, IFT81 and IFT88. Interacts with KIF17.

Its subcellular location is the cell projection. It localises to the cilium. Functionally, required for polyglutamylation of axonemal tubulin. Plays a role in anterograde intraflagellar transport (IFT), the process by which cilia precursors are transported from the base of the cilium to the site of their incorporation at the tip. The chain is Intraflagellar transport protein 70B (Ift70b) from Rattus norvegicus (Rat).